The sequence spans 238 residues: Ubiquinone biosynthesis O-methyltransferase (238 aa).

The S-adenosyl-L-methionine site is built by Arg40, Gly59, Asp81, and Met126.

Belongs to the methyltransferase superfamily. UbiG/COQ3 family.

The enzyme catalyses a 3-demethylubiquinol + S-adenosyl-L-methionine = a ubiquinol + S-adenosyl-L-homocysteine + H(+). It carries out the reaction a 3-(all-trans-polyprenyl)benzene-1,2-diol + S-adenosyl-L-methionine = a 2-methoxy-6-(all-trans-polyprenyl)phenol + S-adenosyl-L-homocysteine + H(+). Its pathway is cofactor biosynthesis; ubiquinone biosynthesis. Functionally, O-methyltransferase that catalyzes the 2 O-methylation steps in the ubiquinone biosynthetic pathway. This chain is Ubiquinone biosynthesis O-methyltransferase, found in Neisseria meningitidis serogroup A / serotype 4A (strain DSM 15465 / Z2491).